The chain runs to 515 residues: Integrator complex subunit 14 (515 aa).

The VWFA domain maps to 2 to 204; it reads PTVVVMDVSL…KNVQSMFGKL (203 aa). Residues Ser-10, Ser-12, and Thr-86 each contribute to the Mg(2+) site. N6-acetyllysine is present on Lys-418.

Belongs to the Integrator subunit 14 family. Component of the Integrator complex, composed of core subunits INTS1, INTS2, INTS3, INTS4, INTS5, INTS6, INTS7, INTS8, INTS9/RC74, INTS10, INTS11/CPSF3L, INTS12, INTS13, INTS14 and INTS15. The core complex associates with protein phosphatase 2A subunits PPP2CA and PPP2R1A, to form the Integrator-PP2A (INTAC) complex. INTS14 is part of the tail subcomplex, composed of INTS10, INTS13, INTS14 and INTS15.

The protein localises to the nucleus. In terms of biological role, component of the integrator complex, a multiprotein complex that terminates RNA polymerase II (Pol II) transcription in the promoter-proximal region of genes. The integrator complex provides a quality checkpoint during transcription elongation by driving premature transcription termination of transcripts that are unfavorably configured for transcriptional elongation: the complex terminates transcription by (1) catalyzing dephosphorylation of the C-terminal domain (CTD) of Pol II subunit POLR2A/RPB1 and SUPT5H/SPT5, (2) degrading the exiting nascent RNA transcript via endonuclease activity and (3) promoting the release of Pol II from bound DNA. The integrator complex is also involved in terminating the synthesis of non-coding Pol II transcripts, such as enhancer RNAs (eRNAs), small nuclear RNAs (snRNAs), telomerase RNAs and long non-coding RNAs (lncRNAs). Within the integrator complex, INTS14 is part of the integrator tail module that acts as a platform for the recruitment of transcription factors at promoters. The chain is Integrator complex subunit 14 from Rattus norvegicus (Rat).